The sequence spans 101 residues: Urease subunit beta (101 aa).

The protein belongs to the urease beta subunit family. Heterotrimer of UreA (gamma), UreB (beta) and UreC (alpha) subunits. Three heterotrimers associate to form the active enzyme.

The protein resides in the cytoplasm. The catalysed reaction is urea + 2 H2O + H(+) = hydrogencarbonate + 2 NH4(+). It participates in nitrogen metabolism; urea degradation; CO(2) and NH(3) from urea (urease route): step 1/1. In Granulibacter bethesdensis (strain ATCC BAA-1260 / CGDNIH1), this protein is Urease subunit beta.